The following is a 278-amino-acid chain: Extracellular metalloprotease MCYG_03238 (278 aa).

A signal peptide spans 1–19 (MRFSIVLSSIAALSSVAAA). The N-linked (GlcNAc...) asparagine glycan is linked to Asn-52. A Zn(2+)-binding site is contributed by His-170. Residue Glu-171 is part of the active site. His-174 serves as a coordination point for Zn(2+). The cysteines at positions 209 and 255 are disulfide-linked.

The protein belongs to the peptidase M43B family.

Its subcellular location is the secreted. In terms of biological role, secreted metalloproteinase that allows assimilation of proteinaceous substrates. Plays a pivotal role as a pathogenicity determinant during infections and contributes to the ability of the pathogen to persist within the mammalian host. The chain is Extracellular metalloprotease MCYG_03238 from Arthroderma otae (strain ATCC MYA-4605 / CBS 113480) (Microsporum canis).